We begin with the raw amino-acid sequence, 475 residues long: UDP-N-acetylmuramate--L-alanine ligase (475 aa).

118–124 provides a ligand contact to ATP; that stretch reads GTHGKTT.

The protein belongs to the MurCDEF family.

Its subcellular location is the cytoplasm. It catalyses the reaction UDP-N-acetyl-alpha-D-muramate + L-alanine + ATP = UDP-N-acetyl-alpha-D-muramoyl-L-alanine + ADP + phosphate + H(+). The protein operates within cell wall biogenesis; peptidoglycan biosynthesis. In terms of biological role, cell wall formation. The chain is UDP-N-acetylmuramate--L-alanine ligase from Thermosynechococcus vestitus (strain NIES-2133 / IAM M-273 / BP-1).